Reading from the N-terminus, the 340-residue chain is Protein-arginine kinase (340 aa).

A Phosphagen kinase C-terminal domain is found at 21–242 (VVLSSRIRLA…EQIIMQERVA (222 aa)). Residues 24 to 28 (SSRIR), His79, Arg113, 164 to 168 (RASVM), and 195 to 200 (RGIYGE) each bind ATP.

The protein belongs to the ATP:guanido phosphotransferase family.

It carries out the reaction L-arginyl-[protein] + ATP = N(omega)-phospho-L-arginyl-[protein] + ADP + H(+). Its function is as follows. Catalyzes the specific phosphorylation of arginine residues in proteins. This Listeria innocua serovar 6a (strain ATCC BAA-680 / CLIP 11262) protein is Protein-arginine kinase.